Consider the following 296-residue polypeptide: Polyamine aminopropyltransferase (296 aa).

The PABS domain maps to 16–251 (HLWYFEYYTG…GMWSYTFASK (236 aa)). Residue glutamine 46 coordinates S-methyl-5'-thioadenosine. Residues histidine 77 and aspartate 101 each contribute to the spermidine site. S-methyl-5'-thioadenosine-binding positions include glutamate 121 and 152-153 (NG). The Proton acceptor role is filled by aspartate 170. 170–173 (DSTD) provides a ligand contact to spermidine.

Belongs to the spermidine/spermine synthase family. In terms of assembly, homodimer or homotetramer.

It localises to the cytoplasm. It carries out the reaction S-adenosyl 3-(methylsulfanyl)propylamine + putrescine = S-methyl-5'-thioadenosine + spermidine + H(+). Its pathway is amine and polyamine biosynthesis; spermidine biosynthesis; spermidine from putrescine: step 1/1. Catalyzes the irreversible transfer of a propylamine group from the amino donor S-adenosylmethioninamine (decarboxy-AdoMet) to putrescine (1,4-diaminobutane) to yield spermidine. This Thermotoga neapolitana (strain ATCC 49049 / DSM 4359 / NBRC 107923 / NS-E) protein is Polyamine aminopropyltransferase.